The primary structure comprises 150 residues: MKELKVSAINKGTVIDHIPSGKGLKVLEILNLPEDNTILVAINVKSQKLGRKDIIKVEGKILNEDEVNKIALIAPTATVNIIDKWEVVEKRNVEVPDEIVGIIKCANPNCITNYEEVKPKFKVISKKPLKLKCHYCERTMEENMVVKNLL.

Zn(2+)-binding residues include C105, C110, C133, and C136.

The protein belongs to the PyrI family. In terms of assembly, contains catalytic and regulatory chains. It depends on Zn(2+) as a cofactor.

In terms of biological role, involved in allosteric regulation of aspartate carbamoyltransferase. The polypeptide is Aspartate carbamoyltransferase regulatory chain (Thermococcus sibiricus (strain DSM 12597 / MM 739)).